The primary structure comprises 475 residues: Chromosomal replication initiator protein DnaA (475 aa).

The segment at 1 to 73 (MSDTEQERWS…LSCWQAELPD (73 aa)) is domain I, interacts with DnaA modulators. The domain II stretch occupies residues 73–131 (DVHRIDLTVRSAMRCAAPVREAPATDARHPERSEGRNGVELKTVATAPASANHDALGGS). Residues 132–354 (PLDPRLTFQS…GAINRLLAHS (223 aa)) are domain III, AAA+ region. ATP is bound by residues Gly-179, Gly-181, Lys-182, and Thr-183. A domain IV, binds dsDNA region spans residues 355–475 (KLNAQPVTLE…VELLKRQLQE (121 aa)).

Belongs to the DnaA family. As to quaternary structure, oligomerizes as a right-handed, spiral filament on DNA at oriC.

The protein localises to the cytoplasm. Its function is as follows. Plays an essential role in the initiation and regulation of chromosomal replication. ATP-DnaA binds to the origin of replication (oriC) to initiate formation of the DNA replication initiation complex once per cell cycle. Binds the DnaA box (a 9 base pair repeat at the origin) and separates the double-stranded (ds)DNA. Forms a right-handed helical filament on oriC DNA; dsDNA binds to the exterior of the filament while single-stranded (ss)DNA is stabiized in the filament's interior. The ATP-DnaA-oriC complex binds and stabilizes one strand of the AT-rich DNA unwinding element (DUE), permitting loading of DNA polymerase. After initiation quickly degrades to an ADP-DnaA complex that is not apt for DNA replication. Binds acidic phospholipids. In Nitrobacter winogradskyi (strain ATCC 25391 / DSM 10237 / CIP 104748 / NCIMB 11846 / Nb-255), this protein is Chromosomal replication initiator protein DnaA.